Reading from the N-terminus, the 501-residue chain is Myrosinase MA1 (501 aa).

Disulfide bonds link Cys-6-Cys-438, Cys-14-Cys-434, and Cys-206-Cys-214. A glycan (N-linked (GlcNAc...) asparagine) is linked at Asn-21. Gln-39 contributes to the substrate binding site. His-56 contacts Zn(2+). Asn-60 carries N-linked (GlcNAc...) asparagine glycosylation. Asp-70 is a binding site for Zn(2+). A glycan (N-linked (GlcNAc...) asparagine) is linked at Asn-90. The substrate site is built by His-141 and Asn-186. Gln-187 contacts L-ascorbate. Residues Asn-218 and Asn-244 are each glycosylated (N-linked (GlcNAc...) asparagine). Arg-259 contacts L-ascorbate. N-linked (GlcNAc...) asparagine glycosylation is found at Asn-265 and Asn-292. Residue Tyr-330 coordinates substrate. Asn-343, Asn-346, and Asn-361 each carry an N-linked (GlcNAc...) asparagine glycan. The active-site Nucleophile is the Glu-409. Substrate is bound by residues Trp-457 and 464 to 465 (EF). A glycan (N-linked (GlcNAc...) asparagine) is linked at Asn-482.

It belongs to the glycosyl hydrolase 1 family. In terms of assembly, homodimer. In terms of tissue distribution, in vacuoles called myrosin grains of a certain class of cells, myrosin cells, distributed in the cotyledons and the axis of the embryo as well as in different organs of the growing plant.

The protein localises to the vacuole. The enzyme catalyses a thioglucoside + H2O = a sugar + a thiol.. Functionally, degradation of glucosinolates (glucose residue linked by a thioglucoside bound to an amino acid derivative) to glucose, sulfate and any of the products: thiocyanates, isothiocyanates, nitriles, epithionitriles or oxazolidine-2-thiones. The chain is Myrosinase MA1 from Sinapis alba (White mustard).